The primary structure comprises 215 residues: 3-isopropylmalate dehydratase small subunit (215 aa).

It belongs to the LeuD family. LeuD type 1 subfamily. Heterodimer of LeuC and LeuD.

It catalyses the reaction (2R,3S)-3-isopropylmalate = (2S)-2-isopropylmalate. Its pathway is amino-acid biosynthesis; L-leucine biosynthesis; L-leucine from 3-methyl-2-oxobutanoate: step 2/4. Functionally, catalyzes the isomerization between 2-isopropylmalate and 3-isopropylmalate, via the formation of 2-isopropylmaleate. The protein is 3-isopropylmalate dehydratase small subunit of Xanthomonas oryzae pv. oryzae (strain MAFF 311018).